The chain runs to 161 residues: Regulator of ribonuclease activity A (161 aa).

The protein belongs to the RraA family. In terms of assembly, homotrimer. Binds to both RNA-binding sites in the C-terminal region of Rne and to RhlB.

The protein resides in the cytoplasm. Functionally, globally modulates RNA abundance by binding to RNase E (Rne) and regulating its endonucleolytic activity. Can modulate Rne action in a substrate-dependent manner by altering the composition of the degradosome. Modulates RNA-binding and helicase activities of the degradosome. The polypeptide is Regulator of ribonuclease activity A (Shigella dysenteriae serotype 1 (strain Sd197)).